Reading from the N-terminus, the 203-residue chain is Urease accessory protein UreG (203 aa).

10-17 lines the GTP pocket; it reads GPVGAGKT.

The protein belongs to the SIMIBI class G3E GTPase family. UreG subfamily. As to quaternary structure, homodimer. UreD, UreF and UreG form a complex that acts as a GTP-hydrolysis-dependent molecular chaperone, activating the urease apoprotein by helping to assemble the nickel containing metallocenter of UreC. The UreE protein probably delivers the nickel.

It is found in the cytoplasm. Its function is as follows. Facilitates the functional incorporation of the urease nickel metallocenter. This process requires GTP hydrolysis, probably effectuated by UreG. The sequence is that of Urease accessory protein UreG from Lachnoclostridium phytofermentans (strain ATCC 700394 / DSM 18823 / ISDg) (Clostridium phytofermentans).